Reading from the N-terminus, the 58-residue chain is Large ribosomal subunit protein uL30 (58 aa).

This sequence belongs to the universal ribosomal protein uL30 family. As to quaternary structure, part of the 50S ribosomal subunit.

This is Large ribosomal subunit protein uL30 from Vibrio campbellii (strain ATCC BAA-1116).